A 176-amino-acid polypeptide reads, in one-letter code: NAD(P)H-quinone oxidoreductase subunit 6, chloroplastic (176 aa).

Helical transmembrane passes span 10-30 (FLLVFLGLGLILGGLGVVLLA), 33-53 (IYSAFSLGLVFVCISLFYILA), 61-81 (AQLLIYVGAINVLIIFAVMFI), 92-112 (LWTVGDGVTSVVCTSLFVSLI), and 152-172 (FFLPFEFISIILLVALIGAIA).

It belongs to the complex I subunit 6 family. In terms of assembly, NDH is composed of at least 16 different subunits, 5 of which are encoded in the nucleus.

It is found in the plastid. It localises to the chloroplast thylakoid membrane. The enzyme catalyses a plastoquinone + NADH + (n+1) H(+)(in) = a plastoquinol + NAD(+) + n H(+)(out). It carries out the reaction a plastoquinone + NADPH + (n+1) H(+)(in) = a plastoquinol + NADP(+) + n H(+)(out). NDH shuttles electrons from NAD(P)H:plastoquinone, via FMN and iron-sulfur (Fe-S) centers, to quinones in the photosynthetic chain and possibly in a chloroplast respiratory chain. The immediate electron acceptor for the enzyme in this species is believed to be plastoquinone. Couples the redox reaction to proton translocation, and thus conserves the redox energy in a proton gradient. The chain is NAD(P)H-quinone oxidoreductase subunit 6, chloroplastic (ndhG) from Guizotia abyssinica (Niger).